The primary structure comprises 117 residues: Protein Wnt-10b (117 aa).

Residue Ser1 is the site of O-palmitoleoyl serine; by PORCN attachment. An intrachain disulfide couples Cys83 to Cys98. Asn84 carries N-linked (GlcNAc...) asparagine glycosylation.

Belongs to the Wnt family. In terms of processing, palmitoleoylation is required for efficient binding to frizzled receptors. Depalmitoleoylation leads to Wnt signaling pathway inhibition.

It is found in the secreted. The protein resides in the extracellular space. It localises to the extracellular matrix. Its function is as follows. Member of the Wnt ligand gene family that encodes for secreted proteins, which activate the Wnt signaling cascade. Involved in neurogenesis. Performs a partially redundant function with wnt1 in the formation of the midbrain-hindbrain boundary (MHB) organizer. The protein is Protein Wnt-10b (WNT-10B) of Plethodon jordani (Red-cheeked salamander).